Here is a 652-residue protein sequence, read N- to C-terminus: Probable export ATP-binding/permease protein PFL_2149 (652 aa).

One can recognise an ABC transporter domain in the interval 6–244 (LHLTGISRSF…APSEPPVSVR (239 aa)). ATP is bound at residue 42 to 49 (GASGSGKS). Helical transmembrane passes span 251-271 (LVAS…ALVS), 277-297 (LLTM…VAIG), 525-545 (LALL…IGVM), 586-606 (IGGA…TLFI), and 615-635 (MGSI…FGFV).

It belongs to the ABC transporter superfamily. Macrolide exporter (TC 3.A.1.122) family. Probably part of a tripartite efflux system, which is composed of an inner membrane transporter, a periplasmic membrane fusion protein, and an outer membrane component.

The protein localises to the cell inner membrane. Probably part of a tripartite efflux system. This chain is Probable export ATP-binding/permease protein PFL_2149, found in Pseudomonas fluorescens (strain ATCC BAA-477 / NRRL B-23932 / Pf-5).